The following is a 209-amino-acid chain: MGDMYDEQFDKAGGPADLMDDSWVESTAWKDLLKKLHSVKFALQSGRDEITGLLTTLSRQCPYSPYEQFPERKVYFLLDSRANNALGVIQNASAFKRRADEKNAVAGVTNIPANPNTTVTTNQGSTTTTKANTSSTLEEDLYTYYKFDDASTTFHKSLTSLENMQLKSYYRRNFEKNFGVKFGSASTPASGGSGATPPPASGGAVRPNP.

Disordered regions lie at residues 108–132 and 181–209; these read VTNI…TKAN and KFGS…RPNP. Residues 116–132 show a composition bias toward low complexity; that stretch reads NTTVTTNQGSTTTTKAN.

It localises to the virion. This chain is Coat protein, found in Tobacco rattle virus (strain PLB).